Consider the following 344-residue polypeptide: Methionine import ATP-binding protein MetN (344 aa).

The ABC transporter domain maps to Ile-2–Ile-241. Residue Gly-38 to Ser-45 coordinates ATP.

It belongs to the ABC transporter superfamily. Methionine importer (TC 3.A.1.24) family. In terms of assembly, the complex is composed of two ATP-binding proteins (MetN), two transmembrane proteins (MetI) and a solute-binding protein (MetQ).

The protein resides in the cell inner membrane. It carries out the reaction L-methionine(out) + ATP + H2O = L-methionine(in) + ADP + phosphate + H(+). It catalyses the reaction D-methionine(out) + ATP + H2O = D-methionine(in) + ADP + phosphate + H(+). Part of the ABC transporter complex MetNIQ involved in methionine import. Responsible for energy coupling to the transport system. This chain is Methionine import ATP-binding protein MetN, found in Pasteurella multocida (strain Pm70).